Reading from the N-terminus, the 461-residue chain is tRNA-2-methylthio-N(6)-dimethylallyladenosine synthase (461 aa).

In terms of domain architecture, MTTase N-terminal spans 25–143; sequence PTYSIITHGC…LPYLIDRHLS (119 aa). Positions 34, 70, 104, 179, 183, and 186 each coordinate [4Fe-4S] cluster. Positions 165 to 395 constitute a Radical SAM core domain; that stretch reads RDNEYVGYVN…LDVAYPIFYE (231 aa). Positions 398–461 constitute a TRAM domain; it reads KSYLGTIQEV…SFALTGEMVD (64 aa).

Belongs to the methylthiotransferase family. MiaB subfamily. In terms of assembly, monomer. [4Fe-4S] cluster is required as a cofactor.

The protein localises to the cytoplasm. It carries out the reaction N(6)-dimethylallyladenosine(37) in tRNA + (sulfur carrier)-SH + AH2 + 2 S-adenosyl-L-methionine = 2-methylsulfanyl-N(6)-dimethylallyladenosine(37) in tRNA + (sulfur carrier)-H + 5'-deoxyadenosine + L-methionine + A + S-adenosyl-L-homocysteine + 2 H(+). In terms of biological role, catalyzes the methylthiolation of N6-(dimethylallyl)adenosine (i(6)A), leading to the formation of 2-methylthio-N6-(dimethylallyl)adenosine (ms(2)i(6)A) at position 37 in tRNAs that read codons beginning with uridine. The protein is tRNA-2-methylthio-N(6)-dimethylallyladenosine synthase of Finegoldia magna (strain ATCC 29328 / DSM 20472 / WAL 2508) (Peptostreptococcus magnus).